We begin with the raw amino-acid sequence, 85 residues long: uncharacterized protein (85 aa).

2 disordered regions span residues 1-22 (MFAP…TSGF) and 41-85 (EKER…SFLR). The segment covering 75–85 (FPSNYRGSFLR) has biased composition (polar residues).

This is an uncharacterized protein from Dryophytes versicolor (chameleon treefrog).